The following is a 1036-amino-acid chain: uncharacterized protein (1036 aa).

This is an uncharacterized protein from Schizosaccharomyces pombe (strain 972 / ATCC 24843) (Fission yeast).